Consider the following 464-residue polypeptide: Protein FAM90A7 (464 aa).

Disordered stretches follow at residues 1 to 42 (MMAR…DPRL), 69 to 387 (VPAT…AGHD), and 410 to 437 (AAPSFHSPEKPGAFLAQSPHVSEKSEAP). 2 stretches are compositionally biased toward basic and acidic residues: residues 74–89 (GKKEGKENLKPWKPRA) and 97–111 (NKDKGEKEERPRQQD). The segment covering 180–197 (LASLSPLRKASLSSSSSL) has biased composition (low complexity).

Belongs to the FAM90 family.

In Homo sapiens (Human), this protein is Protein FAM90A7.